Consider the following 291-residue polypeptide: Transmembrane protein 41B (291 aa).

Positions 1–39 are disordered; that stretch reads MAKGRVAERSQLGAHHTTPVGDGAAGTRGLAAPGSRDHQ. Thr18 bears the Phosphothreonine mark. Residue Ser35 is modified to Phosphoserine. The next 6 membrane-spanning stretches (helical) occupy residues 52 to 72, 109 to 129, 147 to 169, 197 to 217, 225 to 245, and 262 to 282; these read MSLLILVSIFLSAAFVMFLVY, FYVQVLVAYFATYIFLQTFAI, LALFLVCLCSGLGASFCYMLSYL, LINYIIFLRITPFLPNWFINI, PLKVFFIGTFLGVAPPSFVAI, and SWNSIFILMILAVLSILPAIF. The tract at residues 140-251 is VTT domain; required for its function in autophagy; the sequence is GFLYPFPLAL…FVAIKAGTTL (112 aa).

The protein belongs to the TMEM41 family. In terms of assembly, interacts with VMP1. Interacts with COPA, COPB1, VDAC1 and ERLIN2. Interacts with ATG2A. Interacts with SURF4. As to quaternary structure, (Microbial infection) Interacts with Zika virus NS4A protein and Yellow fever virus NS4B protein.

It is found in the endoplasmic reticulum membrane. The protein localises to the endomembrane system. The protein resides in the cytoplasm. It catalyses the reaction a 1,2-diacyl-sn-glycero-3-phospho-L-serine(in) = a 1,2-diacyl-sn-glycero-3-phospho-L-serine(out). It carries out the reaction cholesterol(in) = cholesterol(out). The enzyme catalyses a 1,2-diacyl-sn-glycero-3-phosphocholine(in) = a 1,2-diacyl-sn-glycero-3-phosphocholine(out). The catalysed reaction is a 1,2-diacyl-sn-glycero-3-phosphoethanolamine(in) = a 1,2-diacyl-sn-glycero-3-phosphoethanolamine(out). Phospholipid scramblase involved in lipid homeostasis and membrane dynamics processes. Has phospholipid scramblase activity toward cholesterol and phosphatidylserine, as well as phosphatidylethanolamine and phosphatidylcholine. Required for autophagosome formation: participates in early stages of autophagosome biogenesis at the endoplasmic reticulum (ER) membrane by reequilibrating the leaflets of the ER as lipids are extracted by ATG2 (ATG2A or ATG2B) to mediate autophagosome assembly. In addition to autophagy, involved in other processes in which phospholipid scramblase activity is required. Required for normal motor neuron development. Functionally, (Microbial infection) Critical host factor required for infection by human coronaviruses SARS-CoV-2, HCoV-OC43, HCoV-NL63, and HCoV-229E, as well as all flaviviruses tested such as Zika virus and Yellow fever virus. Required post-entry of the virus to facilitate the ER membrane remodeling necessary to form replication organelles. This chain is Transmembrane protein 41B, found in Homo sapiens (Human).